The chain runs to 392 residues: Vascular endothelial growth factor A, long form (392 aa).

Disordered stretches follow at residues Met1 to Val44 and Asp73 to Arg174. Residues Pro89–Gly104 are compositionally biased toward basic and acidic residues. Low complexity-rich tracts occupy residues Ala121–Pro143 and Pro158–Arg174. 3 disulfides stabilise this stretch: Cys229/Cys271, Cys260/Cys305, and Cys264/Cys307. Residue Asn278 is glycosylated (N-linked (GlcNAc...) asparagine). Residues Pro309–Ser320 show a composition bias toward basic and acidic residues. The segment at Pro309 to Phe337 is disordered. The segment covering Val321–Phe337 has biased composition (basic residues).

This sequence belongs to the PDGF/VEGF growth factor family. In terms of assembly, homodimer; disulfide-linked. Also found as heterodimer with PGF. Interacts with NRP1. Interacts with isoform 2 of BSG. Interacts with CD82; this interaction inhibits VEGFA-mediated signaling pathway. In terms of processing, produced by use of an alternative upstream CUG codon and post-translationally processed into the N-terminal N-VEGF form and the C-terminal secreted VEGFA form. In developing embryos, expressed mainly in the choroid plexus, paraventricular neuroepithelium, placenta and kidney glomeruli. Also found in bronchial epithelium, adrenal gland and in seminiferous tubules of testis. High expression continues in kidney glomeruli and choroid plexus in adults.

Its subcellular location is the cytoplasm. The protein localises to the nucleus. The protein resides in the secreted. It is found in the endoplasmic reticulum. It localises to the golgi apparatus. Its subcellular location is the extracellular space. The protein localises to the extracellular matrix. The protein resides in the cell membrane. Functionally, participates in the induction of key genes involved in the response to hypoxia and in the induction of angiogenesis such as HIF1A. Involved in protecting cells from hypoxia-mediated cell death. In terms of biological role, growth factor active in angiogenesis, vasculogenesis and endothelial cell growth. Induces endothelial cell proliferation, promotes cell migration, inhibits apoptosis and induces permeabilization of blood vessels. Binds to the FLT1/VEGFR1 and KDR/VEGFR2 receptors, heparan sulfate and heparin. Binds to the NRP1/neuropilin-1 receptor. Binding to NRP1 receptor initiates a signaling pathway needed for motor neuron axon guidance and cell body migration, including for the caudal migration of facial motor neurons from rhombomere 4 to rhombomere 6 during embryonic development. Also binds the DEAR/FBXW7-AS1 receptor. May play a role in increasing vascular permeability during lactation, when increased transport of molecules from the blood is required for efficient milk protein synthesis. The sequence is that of Vascular endothelial growth factor A, long form (Vegfa) from Mus musculus (Mouse).